The chain runs to 299 residues: Probable endonuclease 4 (299 aa).

Zn(2+) contacts are provided by His-68, His-110, Glu-145, Asp-179, His-182, His-214, Asp-227, His-229, and Glu-259.

Belongs to the AP endonuclease 2 family. The cofactor is Zn(2+).

The enzyme catalyses Endonucleolytic cleavage to 5'-phosphooligonucleotide end-products.. Endonuclease IV plays a role in DNA repair. It cleaves phosphodiester bonds at apurinic or apyrimidinic (AP) sites, generating a 3'-hydroxyl group and a 5'-terminal sugar phosphate. The sequence is that of Probable endonuclease 4 from Exiguobacterium sibiricum (strain DSM 17290 / CCUG 55495 / CIP 109462 / JCM 13490 / 255-15).